The primary structure comprises 303 residues: Glycine--tRNA ligase alpha subunit (303 aa).

It belongs to the class-II aminoacyl-tRNA synthetase family. In terms of assembly, tetramer of two alpha and two beta subunits.

Its subcellular location is the cytoplasm. It carries out the reaction tRNA(Gly) + glycine + ATP = glycyl-tRNA(Gly) + AMP + diphosphate. This Escherichia coli (strain K12) protein is Glycine--tRNA ligase alpha subunit (glyQ).